The following is a 152-amino-acid chain: Single-stranded DNA-binding protein, mitochondrial (152 aa).

The transit peptide at 1-16 (MFRRPVLQVFRQFVRH) directs the protein to the mitochondrion. Residues 30 to 141 (LNRVQLLGRV…IIAGKKLVVH (112 aa)) enclose the SSB domain. A phosphoserine mark is found at S67 and S79. K113 is subject to N6-acetyllysine. K122 is modified (N6-succinyllysine).

As to quaternary structure, homotetramer. Interacts with MPG/AAG, through inhibition of its glycosylase activity it potentially prevents formation of DNA breaks in ssDNA, ensuring that base removal primarily occurs in dsDNA. Interacts with POLDIP2. Interacts with PRIMPOL. As to expression, expressed in all the layers of the retina (at protein level).

It localises to the mitochondrion. The protein resides in the mitochondrion matrix. It is found in the mitochondrion nucleoid. Binds preferentially and cooperatively to pyrimidine rich single-stranded DNA (ss-DNA). In vitro, required to maintain the copy number of mitochondrial DNA (mtDNA) and plays a crucial role during mtDNA replication by stimulating the activity of the replisome components POLG and TWNK at the replication fork. Promotes the activity of the gamma complex polymerase POLG, largely by organizing the template DNA and eliminating secondary structures to favor ss-DNA conformations that facilitate POLG activity. In addition it is able to promote the 5'-3' unwinding activity of the mtDNA helicase TWNK. May also function in mtDNA repair. This chain is Single-stranded DNA-binding protein, mitochondrial (Ssbp1), found in Mus musculus (Mouse).